We begin with the raw amino-acid sequence, 134 residues long: Estradiol 17-beta-dehydrogenase 8 (134 aa).

A substrate-binding site is contributed by serine 38. N6-succinyllysine is present on lysine 42. Residue tyrosine 51 is the Proton acceptor of the active site. NAD(+)-binding positions include tyrosine 51 to lysine 55 and isoleucine 84 to threonine 86. At lysine 55 the chain carries N6-succinyllysine.

The protein belongs to the short-chain dehydrogenases/reductases (SDR) family. In terms of assembly, heterotetramer with CBR4; contains two molecules of HSD17B8 and CBR4.

The protein resides in the mitochondrion matrix. It carries out the reaction 17beta-estradiol + NAD(+) = estrone + NADH + H(+). The catalysed reaction is 17beta-estradiol + NADP(+) = estrone + NADPH + H(+). The enzyme catalyses testosterone + NAD(+) = androst-4-ene-3,17-dione + NADH + H(+). Its pathway is steroid biosynthesis; estrogen biosynthesis. It participates in lipid metabolism; fatty acid biosynthesis. Functionally, NAD-dependent 17-beta-hydroxysteroid dehydrogenase with highest activity towards estradiol. Has very low activity towards testosterone. The heterotetramer with CBR4 has NADH-dependent 3-ketoacyl-acyl carrier protein reductase activity, and thereby plays a role in mitochondrial fatty acid biosynthesis. Within the heterotetramer, HSD17B8 binds NADH; CBR4 binds NADPD. This is Estradiol 17-beta-dehydrogenase 8 (HSD17B8) from Callithrix jacchus (White-tufted-ear marmoset).